Reading from the N-terminus, the 226-residue chain is MTTPLTWHDVIGAEKEKPYFQQILSQVAQQRQAGKIIYPPQEDVFNAFRFTPFENVNVVILGQDPYHGPNQAHGLSFSVRPGVPAPPSLVNMYKELEQEYPDFKRPNHGYLESWAQQGVLLLNTVLTVEKGQAHSHANYGWEVFTDAVIEQINQRREGVIFLLWGAHAQKKGRFIDTNKHFILKAPHPSPLSAHRGFLGCGHFKQTNNLLAQQGRTPINWQLDPIE.

Catalysis depends on Asp-64, which acts as the Proton acceptor.

Belongs to the uracil-DNA glycosylase (UDG) superfamily. UNG family.

The protein resides in the cytoplasm. The catalysed reaction is Hydrolyzes single-stranded DNA or mismatched double-stranded DNA and polynucleotides, releasing free uracil.. Excises uracil residues from the DNA which can arise as a result of misincorporation of dUMP residues by DNA polymerase or due to deamination of cytosine. This is Uracil-DNA glycosylase from Proteus mirabilis (strain HI4320).